A 344-amino-acid chain; its full sequence is Holliday junction branch migration complex subunit RuvB (344 aa).

Residues 4–194 (CLLRFCYNSL…FGITGHMEYY (191 aa)) are large ATPase domain (RuvB-L). ATP-binding positions include Leu-33, Arg-34, Gly-75, Lys-78, Thr-79, Thr-80, 141–143 (EDF), Arg-184, Tyr-194, and Arg-231. Thr-79 contacts Mg(2+). Positions 195–265 (TDIDLTEIVE…ITDKALTMLD (71 aa)) are small ATPAse domain (RuvB-S). A head domain (RuvB-H) region spans residues 268–344 (HEGLDYVDQK…YEHLGYRYTE (77 aa)). The DNA site is built by Arg-304, Arg-323, Arg-325, and Arg-328.

It belongs to the RuvB family. Homohexamer. Forms an RuvA(8)-RuvB(12)-Holliday junction (HJ) complex. HJ DNA is sandwiched between 2 RuvA tetramers; dsDNA enters through RuvA and exits via RuvB. An RuvB hexamer assembles on each DNA strand where it exits the tetramer. Each RuvB hexamer is contacted by two RuvA subunits (via domain III) on 2 adjacent RuvB subunits; this complex drives branch migration. In the full resolvosome a probable DNA-RuvA(4)-RuvB(12)-RuvC(2) complex forms which resolves the HJ.

It is found in the cytoplasm. The enzyme catalyses ATP + H2O = ADP + phosphate + H(+). Its function is as follows. The RuvA-RuvB-RuvC complex processes Holliday junction (HJ) DNA during genetic recombination and DNA repair, while the RuvA-RuvB complex plays an important role in the rescue of blocked DNA replication forks via replication fork reversal (RFR). RuvA specifically binds to HJ cruciform DNA, conferring on it an open structure. The RuvB hexamer acts as an ATP-dependent pump, pulling dsDNA into and through the RuvAB complex. RuvB forms 2 homohexamers on either side of HJ DNA bound by 1 or 2 RuvA tetramers; 4 subunits per hexamer contact DNA at a time. Coordinated motions by a converter formed by DNA-disengaged RuvB subunits stimulates ATP hydrolysis and nucleotide exchange. Immobilization of the converter enables RuvB to convert the ATP-contained energy into a lever motion, pulling 2 nucleotides of DNA out of the RuvA tetramer per ATP hydrolyzed, thus driving DNA branch migration. The RuvB motors rotate together with the DNA substrate, which together with the progressing nucleotide cycle form the mechanistic basis for DNA recombination by continuous HJ branch migration. Branch migration allows RuvC to scan DNA until it finds its consensus sequence, where it cleaves and resolves cruciform DNA. In Streptococcus mutans serotype c (strain ATCC 700610 / UA159), this protein is Holliday junction branch migration complex subunit RuvB.